Consider the following 967-residue polypeptide: MSEYKETLNLLQTPFPMKGDLPRREPALVERWAAQRVYARMRAAAAGRPPFVLHDGPPYANGDIHIGHAVNKVLKDIVLKSRFAAGYDAQWIPGWDCHGMPIEHRIEQLHGRGLPPEAVQRLCREYAFEQTERQRRDFLRLGLLGDWPHAFRTMDFRTEANELRFLERIRARGLLYRGQKPVNWCVDCQSALAEAELEYARKTSVAIHAGLRVRDPVDFASRFRRRPVLDKPAMLVVWTTTPWTIPGNAAAGVRADAPYGLYDTPGALIVVAQPLADALFASLGVDHALCALARGRELVGLALGQPFFAGRDVPVVEAEFVTLDAGTGIVHLAPAHGAEDAELCRRLGIAGENVVDGAGRFAADLPEIGGLPLADGIARIVAKLRADGTLVREAAFEHAYPHCWRHKTPILFRSTPQWFIGMDIECEQGEADPGRADVTEEAGATGEARKVGKAEEAEEAGPVKTLRASARDAIADVPFYPPSARQRMEAMIDGRPDWCVSRQRTWGVPLPYFVRRDDRSLHPRSARLVEAVAARVERDGIAAWSRLRPAELGVDENAYEKLSDTLDVWFDSGSIHATVYRDAARADTGGYPADLYLEGADQHRGWFGASLMTGCAADGRAPFRAILTHGFVVDGAGRKMSKSLGNTVSPQRIADTRGADILRLWIASTDYAAEMSISDEILERVVETYRRMRNTLRFLLQNVADFDPRDDAVPAGQLLDVDRYALARCREFVDACRSAYARYDFLAVTRLAHGYCAEELGGFYLDALKDRLYASVADGVERRAAQTALHSVLANLLISIAPILSFTAEEAWTVFAGDERDSVFLHTWDEHAPPPDDAALARWAHVRALRPHVTKALEEARGAALIGRSSEAELVVRAPRDVLDALAPLHGELAAVFIVAGVTLETADQIAVAVARTPLARCERCWRHEPSVAAHASGDALCARCRHALSRRARAERSEPRAAVGSR.

The short motif at 58–68 (PYANGDIHIGH) is the 'HIGH' region element. A disordered region spans residues 430–463 (EADPGRADVTEEAGATGEARKVGKAEEAEEAGPV). E598 contributes to the L-isoleucyl-5'-AMP binding site. The 'KMSKS' region motif lies at 639–643 (KMSKS). K642 contacts ATP. Zn(2+) contacts are provided by C922, C925, C942, and C945.

The protein belongs to the class-I aminoacyl-tRNA synthetase family. IleS type 1 subfamily. In terms of assembly, monomer. It depends on Zn(2+) as a cofactor.

Its subcellular location is the cytoplasm. It carries out the reaction tRNA(Ile) + L-isoleucine + ATP = L-isoleucyl-tRNA(Ile) + AMP + diphosphate. Its function is as follows. Catalyzes the attachment of isoleucine to tRNA(Ile). As IleRS can inadvertently accommodate and process structurally similar amino acids such as valine, to avoid such errors it has two additional distinct tRNA(Ile)-dependent editing activities. One activity is designated as 'pretransfer' editing and involves the hydrolysis of activated Val-AMP. The other activity is designated 'posttransfer' editing and involves deacylation of mischarged Val-tRNA(Ile). The protein is Isoleucine--tRNA ligase 2 of Burkholderia pseudomallei (strain K96243).